The primary structure comprises 176 residues: Large ribosomal subunit protein uL10 (176 aa).

It belongs to the universal ribosomal protein uL10 family. Part of the ribosomal stalk of the 50S ribosomal subunit. The N-terminus interacts with L11 and the large rRNA to form the base of the stalk. The C-terminus forms an elongated spine to which L12 dimers bind in a sequential fashion forming a multimeric L10(L12)X complex.

Forms part of the ribosomal stalk, playing a central role in the interaction of the ribosome with GTP-bound translation factors. The polypeptide is Large ribosomal subunit protein uL10 (Marinobacter nauticus (strain ATCC 700491 / DSM 11845 / VT8) (Marinobacter aquaeolei)).